The primary structure comprises 471 residues: Glutamyl-tRNA(Gln) amidotransferase subunit A (471 aa).

Active-site charge relay system residues include Lys-66 and Ser-141. Ser-165 (acyl-ester intermediate) is an active-site residue.

The protein belongs to the amidase family. GatA subfamily. Heterotrimer of A, B and C subunits.

It catalyses the reaction L-glutamyl-tRNA(Gln) + L-glutamine + ATP + H2O = L-glutaminyl-tRNA(Gln) + L-glutamate + ADP + phosphate + H(+). Allows the formation of correctly charged Gln-tRNA(Gln) through the transamidation of misacylated Glu-tRNA(Gln) in organisms which lack glutaminyl-tRNA synthetase. The reaction takes place in the presence of glutamine and ATP through an activated gamma-phospho-Glu-tRNA(Gln). The protein is Glutamyl-tRNA(Gln) amidotransferase subunit A of Thermus thermophilus (strain ATCC BAA-163 / DSM 7039 / HB27).